The chain runs to 289 residues: tRNA(Ile)-lysidine synthase (289 aa).

11–16 contributes to the ATP binding site; it reads SGGPDS.

This sequence belongs to the tRNA(Ile)-lysidine synthase family.

It is found in the cytoplasm. It carries out the reaction cytidine(34) in tRNA(Ile2) + L-lysine + ATP = lysidine(34) in tRNA(Ile2) + AMP + diphosphate + H(+). Ligates lysine onto the cytidine present at position 34 of the AUA codon-specific tRNA(Ile) that contains the anticodon CAU, in an ATP-dependent manner. Cytidine is converted to lysidine, thus changing the amino acid specificity of the tRNA from methionine to isoleucine. The chain is tRNA(Ile)-lysidine synthase from Mycoplasma pneumoniae (strain ATCC 29342 / M129 / Subtype 1) (Mycoplasmoides pneumoniae).